Consider the following 235-residue polypeptide: Octanoyltransferase (235 aa).

Positions 28–203 constitute a BPL/LPL catalytic domain; sequence GRAEETLLLL…PFAGLPADAL (176 aa). Residues 66 to 73, 133 to 135, and 146 to 148 contribute to the substrate site; these read RGGDVTWH, SIG, and GFA. Cys-164 (acyl-thioester intermediate) is an active-site residue. The segment at 202–235 is disordered; it reads ALPEQPRDAVQPSSCDDVHAPSTTSRRPPCPLTV.

It belongs to the LipB family.

Its subcellular location is the cytoplasm. It catalyses the reaction octanoyl-[ACP] + L-lysyl-[protein] = N(6)-octanoyl-L-lysyl-[protein] + holo-[ACP] + H(+). It functions in the pathway protein modification; protein lipoylation via endogenous pathway; protein N(6)-(lipoyl)lysine from octanoyl-[acyl-carrier-protein]: step 1/2. Functionally, catalyzes the transfer of endogenously produced octanoic acid from octanoyl-acyl-carrier-protein onto the lipoyl domains of lipoate-dependent enzymes. Lipoyl-ACP can also act as a substrate although octanoyl-ACP is likely to be the physiological substrate. The polypeptide is Octanoyltransferase (Geobacter sulfurreducens (strain ATCC 51573 / DSM 12127 / PCA)).